The primary structure comprises 351 residues: uncharacterized protein (351 aa).

Residues 1-32 (MKNKKRVFIASSLSCVLLLLSAANTEANSANK) form the signal peptide. A disordered region spans residues 26–74 (EANSANKDSQDQTKKEHVDKAQQKEKRNVNDKDKNTPGPDDIGKNGKVT). Residues 33 to 60 (DSQDQTKKEHVDKAQQKEKRNVNDKDKN) show a composition bias toward basic and acidic residues.

The protein belongs to the aerolysin family.

This is an uncharacterized protein from Staphylococcus aureus (strain MRSA252).